A 196-amino-acid chain; its full sequence is RNA polymerase II subunit B1 CTD phosphatase RTR2 (196 aa).

The RTR1-type zinc finger occupies 52 to 123 (YLARLLSPMS…LSQTPLHERR (72 aa)). Zn(2+) is bound by residues Cys75, Cys80, Cys99, and His103.

The protein belongs to the RPAP2 family.

It is found in the cytoplasm. The protein resides in the nucleus. The catalysed reaction is O-phospho-L-seryl-[protein] + H2O = L-seryl-[protein] + phosphate. The enzyme catalyses O-phospho-L-threonyl-[protein] + H2O = L-threonyl-[protein] + phosphate. In terms of biological role, probable RNA polymerase II subunit B1 C-terminal domain (CTD) phosphatase that regulates RNA polymerase II transcription. May have functional redundancy with RTR1. The sequence is that of RNA polymerase II subunit B1 CTD phosphatase RTR2 (RTR2) from Saccharomyces cerevisiae (strain ATCC 204508 / S288c) (Baker's yeast).